The following is a 1088-amino-acid chain: DNA-directed RNA polymerase subunit beta (1088 aa).

This sequence belongs to the RNA polymerase beta chain family. In terms of assembly, in plastids the minimal PEP RNA polymerase catalytic core is composed of four subunits: alpha, beta, beta', and beta''. When a (nuclear-encoded) sigma factor is associated with the core the holoenzyme is formed, which can initiate transcription.

It is found in the plastid. The protein resides in the chloroplast. The enzyme catalyses RNA(n) + a ribonucleoside 5'-triphosphate = RNA(n+1) + diphosphate. DNA-dependent RNA polymerase catalyzes the transcription of DNA into RNA using the four ribonucleoside triphosphates as substrates. The polypeptide is DNA-directed RNA polymerase subunit beta (Chlorokybus atmophyticus (Soil alga)).